A 961-amino-acid chain; its full sequence is Outer capsid protein VP2 (961 aa).

Belongs to the orbivirus VP2 family.

It is found in the virion. Functionally, the VP2 protein is one of the two proteins (with VP5) target of the host immunogenic response. Responsible for viral which constitute the virus particle outer capsid. It is the major attachment to target host cell, probably by binding to sialic acid. This attachment induces virion internalization predominantly through clathrin-dependent endocytosis. This Bluetongue virus 1 (isolate South Africa) (BTV 1) protein is Outer capsid protein VP2 (Segment-2).